The sequence spans 630 residues: Chaperone protein HtpG (630 aa).

The tract at residues 1–339 is a; substrate-binding; the sequence is MSHTETHAFQ…SNDLPLNVSR (339 aa). A b region spans residues 340 to 556; sequence EILQSNRVVD…EGDISAHMAR (217 aa). Residues 557 to 630 form a c region; it reads MMEQMGQAMP…RMNALLSEVI (74 aa).

The protein belongs to the heat shock protein 90 family. As to quaternary structure, homodimer.

The protein resides in the cytoplasm. Molecular chaperone. Has ATPase activity. The polypeptide is Chaperone protein HtpG (Hydrogenovibrio crunogenus (strain DSM 25203 / XCL-2) (Thiomicrospira crunogena)).